The primary structure comprises 372 residues: Embryonic growth/differentiation factor 1 (372 aa).

The N-terminal stretch at 1–29 (MPPPQQGPCGHHLLLLLALLLPSLPLTRA) is a signal peptide. The propeptide occupies 30–253 (PVPPGPAAAL…LCHPLARPRR (224 aa)). The disordered stretch occupies residues 67–86 (RRRDPQETRSGSRRTSPGVT). The N-linked (GlcNAc...) asparagine glycan is linked to Asn-206. 3 disulfides stabilise this stretch: Cys-267–Cys-337, Cys-296–Cys-369, and Cys-300–Cys-371.

Belongs to the TGF-beta family. Homodimer; disulfide-linked. Expressed in the brain.

Its subcellular location is the secreted. Functionally, may mediate cell differentiation events during embryonic development. This chain is Embryonic growth/differentiation factor 1 (GDF1), found in Homo sapiens (Human).